A 94-amino-acid polypeptide reads, in one-letter code: Co-chaperonin GroES (94 aa).

It belongs to the GroES chaperonin family. As to quaternary structure, heptamer of 7 subunits arranged in a ring. Interacts with the chaperonin GroEL.

The protein localises to the cytoplasm. Together with the chaperonin GroEL, plays an essential role in assisting protein folding. The GroEL-GroES system forms a nano-cage that allows encapsulation of the non-native substrate proteins and provides a physical environment optimized to promote and accelerate protein folding. GroES binds to the apical surface of the GroEL ring, thereby capping the opening of the GroEL channel. The polypeptide is Co-chaperonin GroES (Lactococcus lactis subsp. cremoris (strain SK11)).